We begin with the raw amino-acid sequence, 494 residues long: MFLAKSIVCLALLAVANAQFNTNYASGRSGMVHLFEWKWDDIAAECENFLGPYGYAGVQVSPVNENAVKDSRPWWERYQPISYKLVTRSGNEEQFASMVRRCNNVGVRIYVDVVFNHMAANGGTYGTGGSTASPSSKSYPGVPFSSLDFNPTCAISNYNDANQVRNCELVGLRDLNQGNSYVQEKIVEFLNHLIDLGVAGFRVDAAKHMWPADLGVIYGSLKNLNTDHGFESGAKAYIVQEVIDMGGEAISKSEYTGLGAITEFRHSDSIGKAFRGKNQLQYLVNWGVSWGFAASDRSLVFVDNHDNQRGHGAGGADVLTYKVPKQYKMASAFMLAHPFGTPRVMSSFSFTDTDQGPPTTDGQNIASPSFNSDNSCSGGWVCEHRWKQIYNMVGFRNAVGSDAIQNWWDNGSNQIAFSRGSKGFVAFNNDNYDLNSSVQTGLPAGTYCDVISGSKSGSSCTGKTVTVGSDGRANISIGSSEDDGVLAIHVNAKL.

The signal sequence occupies residues 1–18; that stretch reads MFLAKSIVCLALLAVANA. The cysteines at positions 46 and 102 are disulfide-linked. Residues Asn116, Arg165, and Asp174 each contribute to the Ca(2+) site. A disulfide bridge links Cys153 with Cys167. Arg202 contacts chloride. The active-site Nucleophile is the Asp204. His208 serves as a coordination point for Ca(2+). Glu241 acts as the Proton donor in catalysis. Chloride contacts are provided by Asn304 and Arg343. The disordered stretch occupies residues 350 to 370; that stretch reads FTDTDQGPPTTDGQNIASPSF. The span at 351-363 shows a compositional bias: low complexity; that stretch reads TDTDQGPPTTDGQ. Cystine bridges form between Cys376-Cys382 and Cys448-Cys460.

Belongs to the glycosyl hydrolase 13 family. Monomer. Ca(2+) serves as cofactor. The cofactor is chloride.

It catalyses the reaction Endohydrolysis of (1-&gt;4)-alpha-D-glucosidic linkages in polysaccharides containing three or more (1-&gt;4)-alpha-linked D-glucose units.. This is Alpha-amylase 1 (Amy35) from Drosophila ananassae (Fruit fly).